A 238-amino-acid chain; its full sequence is Probable transcriptional regulatory protein VPA0011 (238 aa).

Belongs to the TACO1 family.

The protein localises to the cytoplasm. The protein is Probable transcriptional regulatory protein VPA0011 of Vibrio parahaemolyticus serotype O3:K6 (strain RIMD 2210633).